We begin with the raw amino-acid sequence, 333 residues long: Phosphoribosylformylglycinamidine cyclo-ligase (333 aa).

It belongs to the AIR synthase family.

The protein localises to the cytoplasm. It carries out the reaction 2-formamido-N(1)-(5-O-phospho-beta-D-ribosyl)acetamidine + ATP = 5-amino-1-(5-phospho-beta-D-ribosyl)imidazole + ADP + phosphate + H(+). The protein operates within purine metabolism; IMP biosynthesis via de novo pathway; 5-amino-1-(5-phospho-D-ribosyl)imidazole from N(2)-formyl-N(1)-(5-phospho-D-ribosyl)glycinamide: step 2/2. This Methanosarcina mazei (strain ATCC BAA-159 / DSM 3647 / Goe1 / Go1 / JCM 11833 / OCM 88) (Methanosarcina frisia) protein is Phosphoribosylformylglycinamidine cyclo-ligase.